A 411-amino-acid polypeptide reads, in one-letter code: Alpha-galactosidase (411 aa).

The first 24 residues, 1–24 (MATHYSIIGGMIIVVLLMIIGSEG), serve as a signal peptide directing secretion. Positions 25–47 (GRLLEKKNRTSAEAEHYNVRRYL) are excised as a propeptide. Asn-32 carries N-linked (GlcNAc...) asparagine glycosylation. Cysteines 68 and 100 form a disulfide. Asn-145 carries N-linked (GlcNAc...) asparagine glycosylation. Cys-148 and Cys-179 are joined by a disulfide. Asp-177 acts as the Nucleophile in catalysis. 210–214 (EWGWE) is a substrate binding site. The Proton donor role is filled by Asp-232. Asn-352 carries N-linked (GlcNAc...) asparagine glycosylation.

It belongs to the glycosyl hydrolase 27 family.

The catalysed reaction is Hydrolysis of terminal, non-reducing alpha-D-galactose residues in alpha-D-galactosides, including galactose oligosaccharides, galactomannans and galactolipids.. Its function is as follows. Involved in the hydrolysis of the galactomannan, it splits alpha-linked galactose moieties. It is particularly suitable for the hydrolysis of guar gum to a gum with improved gelling properties. Preferentially cleaves alpha-1,6 glycoside linkages. In Cyamopsis tetragonoloba (Guar), this protein is Alpha-galactosidase.